The primary structure comprises 274 residues: 23S rRNA (adenosine(1067)-2'-O)-methyltransferase (274 aa).

Residues R165, L195, 218–220, 238–240, and 247–252 contribute to the S-adenosyl-L-methionine site; these read GSE, IPM, and LNVSVS.

The protein belongs to the class IV-like SAM-binding methyltransferase superfamily. RNA methyltransferase TsnR/AvirB family. Homodimer.

It catalyses the reaction adenosine(1067) in 23S rRNA + S-adenosyl-L-methionine = 2'-O-methyladenosine(1067) in 23S rRNA + S-adenosyl-L-homocysteine + H(+). Its function is as follows. Specifically methylates the adenosine-1067 in 23S ribosomal RNA. Confers resistance to antibiotic nosiheptide. This chain is 23S rRNA (adenosine(1067)-2'-O)-methyltransferase, found in Streptomyces actuosus.